Consider the following 311-residue polypeptide: MAPFSFILTVLLYALTCSARALGHAHALLPRAGSLEQVTDFGDNPTNVGMYIYVPNNLASSPGIVVAIHYSPEGTGTAEAYYTGSPYAQLAEQYGFIVIYPQSPYEGTCWDVSSQETLTHNGGGNSNSIANMVTWAISKYNADSSKVFVTGSSSGAMMTHQNVMAATYPELFAAATVYSGVPAGCFYSSSNQQDGWNSTCAQGQVITTPENWANVAKGMYPGYNGTRPKMQIYHGSVDTTLLPQNYYETCKQWAGVFGYNYDSPQQVQDNTPQSNYATTTWGDDLQGIFATGVGHTVPIRGDDDMAWFGFA.

An N-terminal signal peptide occupies residues 1 to 19 (MAPFSFILTVLLYALTCSA). Serine 153 serves as the catalytic Charge relay system. 2 N-linked (GlcNAc...) asparagine glycosylation sites follow: asparagine 197 and asparagine 224.

Belongs to the carbohydrate esterase 1 (CE1) family. AxeA subfamily. As to quaternary structure, monomer.

It is found in the secreted. The enzyme catalyses Deacetylation of xylans and xylo-oligosaccharides.. It participates in glycan degradation; xylan degradation. In terms of biological role, acetylxylan esterase involved in the hydrolysis of xylan, a major structural heterogeneous polysaccharide found in plant biomass representing the second most abundant polysaccharide in the biosphere, after cellulose. Degrades acetylated xylans by cleaving acetyl side groups from the hetero-xylan backbone. In Aspergillus terreus (strain NIH 2624 / FGSC A1156), this protein is Probable acetylxylan esterase A (axeA).